An 810-amino-acid chain; its full sequence is Probable inorganic carbon transporter subunit DabA (810 aa).

Zn(2+) is bound by residues cysteine 347, aspartate 349, histidine 509, and cysteine 524.

The protein belongs to the inorganic carbon transporter (TC 9.A.2) DabA family. As to quaternary structure, forms a complex with DabB. Zn(2+) is required as a cofactor.

It localises to the cell inner membrane. Part of an energy-coupled inorganic carbon pump. The sequence is that of Probable inorganic carbon transporter subunit DabA from Marinomonas sp. (strain MWYL1).